We begin with the raw amino-acid sequence, 360 residues long: DNA replication and repair protein RecF (360 aa).

30–37 is a binding site for ATP; that stretch reads GQNGSGKT.

This sequence belongs to the RecF family.

It localises to the cytoplasm. Functionally, the RecF protein is involved in DNA metabolism; it is required for DNA replication and normal SOS inducibility. RecF binds preferentially to single-stranded, linear DNA. It also seems to bind ATP. This chain is DNA replication and repair protein RecF, found in Shewanella putrefaciens (strain CN-32 / ATCC BAA-453).